The primary structure comprises 914 residues: UPF0182 protein Syncc9605_1323 (914 aa).

The next 9 helical transmembrane spans lie at 4–24, 37–57, 81–101, 123–143, 152–172, 195–215, 240–260, 285–305, and 312–332; these read LLLL…WLWF, WLLQ…ARAW, IALL…LDLL, RIGS…MTWL, IVAA…SLAL, FAGL…TLVF, MRLI…LVWL, LPLR…LLLP, and QFLA…TPLT.

It belongs to the UPF0182 family.

It is found in the cell membrane. In Synechococcus sp. (strain CC9605), this protein is UPF0182 protein Syncc9605_1323.